Reading from the N-terminus, the 394-residue chain is NAD(P)H-quinone oxidoreductase subunit H (394 aa).

This sequence belongs to the complex I 49 kDa subunit family. As to quaternary structure, NDH-1 can be composed of about 15 different subunits; different subcomplexes with different compositions have been identified which probably have different functions.

The protein localises to the cellular thylakoid membrane. It catalyses the reaction a plastoquinone + NADH + (n+1) H(+)(in) = a plastoquinol + NAD(+) + n H(+)(out). The enzyme catalyses a plastoquinone + NADPH + (n+1) H(+)(in) = a plastoquinol + NADP(+) + n H(+)(out). In terms of biological role, NDH-1 shuttles electrons from an unknown electron donor, via FMN and iron-sulfur (Fe-S) centers, to quinones in the respiratory and/or the photosynthetic chain. The immediate electron acceptor for the enzyme in this species is believed to be plastoquinone. Couples the redox reaction to proton translocation, and thus conserves the redox energy in a proton gradient. Cyanobacterial NDH-1 also plays a role in inorganic carbon-concentration. The protein is NAD(P)H-quinone oxidoreductase subunit H of Synechococcus sp. (strain RCC307).